The chain runs to 377 residues: tRNA-specific 2-thiouridylase MnmA (377 aa).

ATP-binding positions include glycine 8–serine 15 and methionine 34. Positions asparagine 94–aspartate 96 are interaction with target base in tRNA. Cysteine 99 functions as the Nucleophile in the catalytic mechanism. Cysteine 99 and cysteine 201 are oxidised to a cystine. Position 123 (glycine 123) interacts with ATP. The interval lysine 151–glutamine 153 is interaction with tRNA. Cysteine 201 functions as the Cysteine persulfide intermediate in the catalytic mechanism. An interaction with tRNA region spans residues arginine 315–tyrosine 316.

This sequence belongs to the MnmA/TRMU family.

It is found in the cytoplasm. The catalysed reaction is S-sulfanyl-L-cysteinyl-[protein] + uridine(34) in tRNA + AH2 + ATP = 2-thiouridine(34) in tRNA + L-cysteinyl-[protein] + A + AMP + diphosphate + H(+). Catalyzes the 2-thiolation of uridine at the wobble position (U34) of tRNA, leading to the formation of s(2)U34. The sequence is that of tRNA-specific 2-thiouridylase MnmA from Acinetobacter baumannii (strain SDF).